The sequence spans 490 residues: Glutamate--tRNA ligase (490 aa).

Positions 9–19 (PSPTGLQHIGG) match the 'HIGH' region motif. Residues 251-255 (KLSKR) carry the 'KMSKS' region motif. An ATP-binding site is contributed by Lys254.

It belongs to the class-I aminoacyl-tRNA synthetase family. Glutamate--tRNA ligase type 1 subfamily. Monomer.

Its subcellular location is the cytoplasm. It catalyses the reaction tRNA(Glu) + L-glutamate + ATP = L-glutamyl-tRNA(Glu) + AMP + diphosphate. In terms of biological role, catalyzes the attachment of glutamate to tRNA(Glu) in a two-step reaction: glutamate is first activated by ATP to form Glu-AMP and then transferred to the acceptor end of tRNA(Glu). This Borreliella afzelii (strain PKo) (Borrelia afzelii) protein is Glutamate--tRNA ligase.